Consider the following 968-residue polypeptide: Phosphoenolpyruvate carboxylase 3 (968 aa).

Residue serine 11 is modified to Phosphoserine. Catalysis depends on residues histidine 173 and lysine 603. The residue at position 705 (serine 705) is a Phosphoserine.

This sequence belongs to the PEPCase type 1 family. Homotetramer. It depends on Mg(2+) as a cofactor. Expressed in roots and siliques, and to a lower extent in stems, leaves and flowers.

The protein resides in the cytoplasm. It carries out the reaction oxaloacetate + phosphate = phosphoenolpyruvate + hydrogencarbonate. With respect to regulation, by light-reversible phosphorylation. Functionally, through the carboxylation of phosphoenolpyruvate (PEP) it forms oxaloacetate, a four-carbon dicarboxylic acid source for the tricarboxylic acid cycle. This Arabidopsis thaliana (Mouse-ear cress) protein is Phosphoenolpyruvate carboxylase 3 (PPC3).